A 330-amino-acid chain; its full sequence is DNA-directed RNA polymerase subunit alpha (330 aa).

The tract at residues 1-231 is alpha N-terminal domain (alpha-NTD); it reads MQTNLLKPKT…EQLAVFAQLE (231 aa). An alpha C-terminal domain (alpha-CTD) region spans residues 250–330; it reads FDPILLRPVD…SWPPAGLDKR (81 aa).

This sequence belongs to the RNA polymerase alpha chain family. In terms of assembly, homodimer. The RNAP catalytic core consists of 2 alpha, 1 beta, 1 beta' and 1 omega subunit. When a sigma factor is associated with the core the holoenzyme is formed, which can initiate transcription.

The catalysed reaction is RNA(n) + a ribonucleoside 5'-triphosphate = RNA(n+1) + diphosphate. In terms of biological role, DNA-dependent RNA polymerase catalyzes the transcription of DNA into RNA using the four ribonucleoside triphosphates as substrates. This Polaromonas naphthalenivorans (strain CJ2) protein is DNA-directed RNA polymerase subunit alpha.